Here is a 696-residue protein sequence, read N- to C-terminus: UV radiation resistance-associated gene protein (696 aa).

2 positions are modified to phosphoserine: Ser214 and Ser218. Coiled-coil stretches lie at residues Leu251–Leu278 and Asn330–Leu394. Position 666 is a phosphoserine (Ser666). Positions Ser666–Ser696 are disordered. Position 667 is a phosphotyrosine (Tyr667). Residues Ser668 and Ser685 each carry the phosphoserine modification. Positions Asn681 to Ser696 are enriched in polar residues.

In terms of biological role, involved in biosynthetic vesicle transport to lysosomes. Acts as a cell growth regulator. Also has a crucial role in controlling organ rotation by regulating membrane-localized Notch receptor endocytosis and subsequent degradation. Regulation of organ rotation is not by induction of autophagy. The sequence is that of UV radiation resistance-associated gene protein (Uvrag) from Drosophila melanogaster (Fruit fly).